The following is a 402-amino-acid chain: Protein arginine methyltransferase NDUFAF7 homolog, mitochondrial (402 aa).

It belongs to the NDUFAF7 family.

It is found in the mitochondrion. It catalyses the reaction L-arginyl-[protein] + 2 S-adenosyl-L-methionine = N(omega),N(omega)'-dimethyl-L-arginyl-[protein] + 2 S-adenosyl-L-homocysteine + 2 H(+). In terms of biological role, arginine methyltransferase involved in the assembly or stability of mitochondrial NADH:ubiquinone oxidoreductase complex (complex I). The chain is Protein arginine methyltransferase NDUFAF7 homolog, mitochondrial from Saccharomyces cerevisiae (strain ATCC 204508 / S288c) (Baker's yeast).